The chain runs to 459 residues: Ribosomal protein uS12 methylthiotransferase RimO (459 aa).

The disordered stretch occupies residues 1–28; it reads MSTNPPDLRPDLAPKARLTQPDRPGQPT. The MTTase N-terminal domain maps to 27–137; the sequence is PTIGMVSLGC…VLDAVHAAVP (111 aa). 6 residues coordinate [4Fe-4S] cluster: Cys36, Cys72, Cys101, Cys168, Cys172, and Cys175. One can recognise a Radical SAM core domain in the interval 154–387; the sequence is LTPRHFSYLK…MAKSQDISEA (234 aa). Positions 390–457 constitute a TRAM domain; it reads AAKVAQRLEV…EYDLWGRLAP (68 aa).

It belongs to the methylthiotransferase family. RimO subfamily. The cofactor is [4Fe-4S] cluster.

It localises to the cytoplasm. It catalyses the reaction L-aspartate(89)-[ribosomal protein uS12]-hydrogen + (sulfur carrier)-SH + AH2 + 2 S-adenosyl-L-methionine = 3-methylsulfanyl-L-aspartate(89)-[ribosomal protein uS12]-hydrogen + (sulfur carrier)-H + 5'-deoxyadenosine + L-methionine + A + S-adenosyl-L-homocysteine + 2 H(+). Its function is as follows. Catalyzes the methylthiolation of an aspartic acid residue of ribosomal protein uS12. The protein is Ribosomal protein uS12 methylthiotransferase RimO of Roseobacter denitrificans (strain ATCC 33942 / OCh 114) (Erythrobacter sp. (strain OCh 114)).